Reading from the N-terminus, the 308-residue chain is Bifunctional protein FolD (308 aa).

NADP(+) contacts are provided by residues 175-177 (GRS), Ser200, and Ile241.

Belongs to the tetrahydrofolate dehydrogenase/cyclohydrolase family. As to quaternary structure, homodimer.

It carries out the reaction (6R)-5,10-methylene-5,6,7,8-tetrahydrofolate + NADP(+) = (6R)-5,10-methenyltetrahydrofolate + NADPH. The catalysed reaction is (6R)-5,10-methenyltetrahydrofolate + H2O = (6R)-10-formyltetrahydrofolate + H(+). Its pathway is one-carbon metabolism; tetrahydrofolate interconversion. Its function is as follows. Catalyzes the oxidation of 5,10-methylenetetrahydrofolate to 5,10-methenyltetrahydrofolate and then the hydrolysis of 5,10-methenyltetrahydrofolate to 10-formyltetrahydrofolate. This Jannaschia sp. (strain CCS1) protein is Bifunctional protein FolD.